A 498-amino-acid polypeptide reads, in one-letter code: ATP synthase subunit beta, chloroplastic (498 aa).

Residue 172-179 (GGAGVGKT) participates in ATP binding.

It belongs to the ATPase alpha/beta chains family. F-type ATPases have 2 components, CF(1) - the catalytic core - and CF(0) - the membrane proton channel. CF(1) has five subunits: alpha(3), beta(3), gamma(1), delta(1), epsilon(1). CF(0) has four main subunits: a(1), b(1), b'(1) and c(9-12).

Its subcellular location is the plastid. It localises to the chloroplast thylakoid membrane. It carries out the reaction ATP + H2O + 4 H(+)(in) = ADP + phosphate + 5 H(+)(out). In terms of biological role, produces ATP from ADP in the presence of a proton gradient across the membrane. The catalytic sites are hosted primarily by the beta subunits. The chain is ATP synthase subunit beta, chloroplastic from Castanea sativa (Sweet chestnut).